The following is a 354-amino-acid chain: Bifunctional transcriptional activator/DNA repair enzyme Ada (354 aa).

A methylphosphotriester-DNA--protein-cysteine methyltransferase region spans residues 1 to 171 (MKKATCLTDD…SSSYYRKADE (171 aa)). Thr-34 is a binding site for DNA. Residue Cys-38 is the Nucleophile; methyl group acceptor from methylphosphotriester of the active site. Residues Cys-38 and Cys-42 each contribute to the Zn(2+) site. DNA-binding residues include Arg-43, Arg-45, and Arg-67. 2 residues coordinate Zn(2+): Cys-69 and Cys-72. Positions 85 to 183 (DKITHACRLL…GMTAKQFRHG (99 aa)) constitute an HTH araC/xylS-type domain. A DNA-binding region (H-T-H motif) is located at residues 102–121 (LEALADQVAMSPFHLHRLFK). The interval 181 to 354 (RHGGENLAVR…LRREAENEER (174 aa)) is methylated-DNA--protein-cysteine methyltransferase. Catalysis depends on Cys-321, which acts as the Nucleophile; methyl group acceptor from either O6-methylguanine or O4-methylthymine.

The protein in the C-terminal section; belongs to the MGMT family. Requires Zn(2+) as cofactor.

It carries out the reaction (2'-deoxyribonucleoside 5'-methylphosphotriester)-DNA + L-cysteinyl-[protein] = 2'-deoxyribonucleotide-DNA + S-methyl-L-cysteinyl-[protein] + H(+). The catalysed reaction is a 6-O-methyl-2'-deoxyguanosine in DNA + L-cysteinyl-[protein] = S-methyl-L-cysteinyl-[protein] + a 2'-deoxyguanosine in DNA. The enzyme catalyses a 4-O-methyl-thymidine in DNA + L-cysteinyl-[protein] = a thymidine in DNA + S-methyl-L-cysteinyl-[protein]. Involved in the adaptive response to alkylation damage in DNA caused by alkylating agents. Repairs O6-methylguanine (O6-MeG) and O4-methylthymine (O4-MeT) in DNA. Repairs the methylated nucleobase in DNA by stoichiometrically transferring the methyl group to a cysteine residue in the enzyme (Cys-321). Also specifically repairs the Sp diastereomer of DNA methylphosphotriester lesions by the same mechanism, although the methyl transfer occurs onto a different cysteine residue (Cys-38). Cannot demethylate the other diastereomer, Rp-methylphosphotriester. This is a suicide reaction: the enzyme is irreversibly inactivated. Functionally, the methylation of Ada by methylphosphotriesters in DNA leads to its activation as a transcriptional regulator that activates the transcription of its own gene, ada, and other alkylation resistance genes, alkA, alkB and aidB. In Escherichia coli (strain K12), this protein is Bifunctional transcriptional activator/DNA repair enzyme Ada (ada).